Reading from the N-terminus, the 440-residue chain is Adenylosuccinate synthetase (440 aa).

Residues 12-18 and 40-42 each bind GTP; these read GDEGKGK and GHT. The active-site Proton acceptor is Asp-13. Positions 13 and 40 each coordinate Mg(2+). IMP contacts are provided by residues 13–16, 38–41, Thr-128, Arg-142, Gln-223, Thr-238, and Arg-302; these read DEGK and NAGH. His-41 acts as the Proton donor in catalysis. 298-304 lines the substrate pocket; it reads TTTGRPR. Residues Arg-304, 330 to 332, and 412 to 414 contribute to the GTP site; these read KLD and SVG.

This sequence belongs to the adenylosuccinate synthetase family. As to quaternary structure, homodimer. Mg(2+) is required as a cofactor.

It localises to the cytoplasm. The enzyme catalyses IMP + L-aspartate + GTP = N(6)-(1,2-dicarboxyethyl)-AMP + GDP + phosphate + 2 H(+). It functions in the pathway purine metabolism; AMP biosynthesis via de novo pathway; AMP from IMP: step 1/2. Its function is as follows. Plays an important role in the de novo pathway of purine nucleotide biosynthesis. Catalyzes the first committed step in the biosynthesis of AMP from IMP. The polypeptide is Adenylosuccinate synthetase (Gloeobacter violaceus (strain ATCC 29082 / PCC 7421)).